The following is a 325-amino-acid chain: Malate dehydrogenase (325 aa).

9–15 (GAAGAIG) serves as a coordination point for NAD(+). Residues Arg-90 and Arg-96 each coordinate substrate. Residues Asn-103, Gln-110, and 127-129 (VGN) each bind NAD(+). Substrate contacts are provided by Asn-129 and Arg-160. His-185 acts as the Proton acceptor in catalysis.

Belongs to the LDH/MDH superfamily. MDH type 2 family.

It catalyses the reaction (S)-malate + NAD(+) = oxaloacetate + NADH + H(+). Catalyzes the reversible oxidation of malate to oxaloacetate. The sequence is that of Malate dehydrogenase from Rubrobacter xylanophilus (strain DSM 9941 / JCM 11954 / NBRC 16129 / PRD-1).